The primary structure comprises 297 residues: N-acetylmuramic acid 6-phosphate etherase (297 aa).

An SIS domain is found at 55 to 218; it reads AAAALKSGGR…STGAMVKFGK (164 aa). The Proton donor role is filled by glutamate 83. Glutamate 114 is a catalytic residue.

It belongs to the GCKR-like family. MurNAc-6-P etherase subfamily. In terms of assembly, homodimer.

It catalyses the reaction N-acetyl-D-muramate 6-phosphate + H2O = N-acetyl-D-glucosamine 6-phosphate + (R)-lactate. The protein operates within amino-sugar metabolism; 1,6-anhydro-N-acetylmuramate degradation. It functions in the pathway amino-sugar metabolism; N-acetylmuramate degradation. Its pathway is cell wall biogenesis; peptidoglycan recycling. In terms of biological role, specifically catalyzes the cleavage of the D-lactyl ether substituent of MurNAc 6-phosphate, producing GlcNAc 6-phosphate and D-lactate. Together with AnmK, is also required for the utilization of anhydro-N-acetylmuramic acid (anhMurNAc) either imported from the medium or derived from its own cell wall murein, and thus plays a role in cell wall recycling. This is N-acetylmuramic acid 6-phosphate etherase from Salmonella typhi.